A 196-amino-acid polypeptide reads, in one-letter code: MSNIVWHQHAVSKQSRSELKGQKPLVIWFTGLSGAGKSTLAGALEQALAVEGKHTYLLDGDNVRHGLCGDLGFDDAARQENIRRVGEVAKLMVDAGLIVLTAFISPFRAERELVRNLLGADEFVEVFVDAPLAVCEERDPKGLYKKARAGEIRNFTGIDSAYEAPKQPEIHLLNAGKPVAALVDELLTALRQGNYL.

31–38 serves as a coordination point for ATP; sequence GLSGAGKS. The active-site Phosphoserine intermediate is the Ser-105.

It belongs to the APS kinase family.

It catalyses the reaction adenosine 5'-phosphosulfate + ATP = 3'-phosphoadenylyl sulfate + ADP + H(+). It functions in the pathway sulfur metabolism; hydrogen sulfide biosynthesis; sulfite from sulfate: step 2/3. Its function is as follows. Catalyzes the synthesis of activated sulfate. The protein is Adenylyl-sulfate kinase of Aeromonas salmonicida (strain A449).